The chain runs to 181 residues: LEM domain-containing protein 1 (181 aa).

Residues 1-45 (MVDVKCLSDCKLQNQLEKLGFSPGPILPSTRKLYEKKLVQLLVSP) enclose the LEM domain. Residues 152–172 (FPVGLKLAVLGIFIIVVFVYL) form a helical; Signal-anchor for type II membrane protein membrane-spanning segment.

In terms of tissue distribution, testis-specific. Isoform 6 is detected in 17 of 18 colon cancer tissues examined.

The protein resides in the membrane. The polypeptide is LEM domain-containing protein 1 (LEMD1) (Homo sapiens (Human)).